A 245-amino-acid chain; its full sequence is Homeobox protein goosecoid (245 aa).

Residues 150 to 209 constitute a DNA-binding region (homeobox); sequence KRRHRTIFTDEQLEALENLFQETKYPDVGTREQLARKVHLREEKVEVWFKNRRAKWRRQK. A disordered region spans residues 203–245; that stretch reads AKWRRQKRSSSEESENAQKWNKASKTSPEKRQEDGKSDLDSDS. Positions 219 to 228 are enriched in polar residues; that stretch reads AQKWNKASKT. The span at 229-245 shows a compositional bias: basic and acidic residues; that stretch reads SPEKRQEDGKSDLDSDS.

The protein belongs to the paired homeobox family. Bicoid subfamily.

It localises to the nucleus. Its function is as follows. Involved in the development of the organizer region in the gastrula (Hensen node in chicken). The polypeptide is Homeobox protein goosecoid (GSC) (Gallus gallus (Chicken)).